The following is a 404-amino-acid chain: Formate-dependent phosphoribosylglycinamide formyltransferase (404 aa).

Residues 25-26 (EL) and Glu85 contribute to the N(1)-(5-phospho-beta-D-ribosyl)glycinamide site. Residues Arg118, Lys159, 164–169 (SSGKGQ), 199–202 (EGFI), and Glu207 contribute to the ATP site. The region spanning 123 to 318 (RLAAEELGLA…EFELHARAIL (196 aa)) is the ATP-grasp domain. The Mg(2+) site is built by Glu277 and Glu289. N(1)-(5-phospho-beta-D-ribosyl)glycinamide is bound by residues Asp296, Lys365, and 372-373 (RR).

This sequence belongs to the PurK/PurT family. In terms of assembly, homodimer.

It catalyses the reaction N(1)-(5-phospho-beta-D-ribosyl)glycinamide + formate + ATP = N(2)-formyl-N(1)-(5-phospho-beta-D-ribosyl)glycinamide + ADP + phosphate + H(+). It participates in purine metabolism; IMP biosynthesis via de novo pathway; N(2)-formyl-N(1)-(5-phospho-D-ribosyl)glycinamide from N(1)-(5-phospho-D-ribosyl)glycinamide (formate route): step 1/1. Its function is as follows. Involved in the de novo purine biosynthesis. Catalyzes the transfer of formate to 5-phospho-ribosyl-glycinamide (GAR), producing 5-phospho-ribosyl-N-formylglycinamide (FGAR). Formate is provided by PurU via hydrolysis of 10-formyl-tetrahydrofolate. The protein is Formate-dependent phosphoribosylglycinamide formyltransferase of Burkholderia vietnamiensis (strain G4 / LMG 22486) (Burkholderia cepacia (strain R1808)).